Consider the following 126-residue polypeptide: Protein ApaG (126 aa).

In terms of domain architecture, ApaG spans 2–126 (SDPRYQIDVS…FRLAVPGALH (125 aa)).

The chain is Protein ApaG from Pseudomonas fluorescens (strain SBW25).